The primary structure comprises 135 residues: Probable histone H2A.7 (135 aa).

This sequence belongs to the histone H2A family. In terms of assembly, the nucleosome is a histone octamer containing two molecules each of H2A, H2B, H3 and H4 assembled in one H3-H4 heterotetramer and two H2A-H2B heterodimers. The octamer wraps approximately 147 bp of DNA.

Its subcellular location is the nucleus. The protein localises to the chromosome. Core component of nucleosome. Nucleosomes wrap and compact DNA into chromatin, limiting DNA accessibility to the cellular machineries which require DNA as a template. Histones thereby play a central role in transcription regulation, DNA repair, DNA replication and chromosomal stability. DNA accessibility is regulated via a complex set of post-translational modifications of histones, also called histone code, and nucleosome remodeling. The protein is Probable histone H2A.7 of Oryza sativa subsp. indica (Rice).